The following is a 465-amino-acid chain: 23S rRNA (uracil(1939)-C(5))-methyltransferase RlmD (465 aa).

Residues 1–24 (MSEAVPLSTRRASSAGDAPGRAPV) form a disordered region. One can recognise a TRAM domain in the interval 16–80 (GDAPGRAPVL…PTYEQAQVVD (65 aa)). [4Fe-4S] cluster is bound by residues C93, C99, C102, and C181. Q289, F318, N323, E339, N367, and D388 together coordinate S-adenosyl-L-methionine. C421 acts as the Nucleophile in catalysis.

The protein belongs to the class I-like SAM-binding methyltransferase superfamily. RNA M5U methyltransferase family. RlmD subfamily.

The catalysed reaction is uridine(1939) in 23S rRNA + S-adenosyl-L-methionine = 5-methyluridine(1939) in 23S rRNA + S-adenosyl-L-homocysteine + H(+). Its function is as follows. Catalyzes the formation of 5-methyl-uridine at position 1939 (m5U1939) in 23S rRNA. The sequence is that of 23S rRNA (uracil(1939)-C(5))-methyltransferase RlmD from Burkholderia mallei (strain ATCC 23344).